A 561-amino-acid polypeptide reads, in one-letter code: DNA ligase B (561 aa).

The N6-AMP-lysine intermediate role is filled by K128.

The protein belongs to the NAD-dependent DNA ligase family. LigB subfamily.

The catalysed reaction is NAD(+) + (deoxyribonucleotide)n-3'-hydroxyl + 5'-phospho-(deoxyribonucleotide)m = (deoxyribonucleotide)n+m + AMP + beta-nicotinamide D-nucleotide.. Catalyzes the formation of phosphodiester linkages between 5'-phosphoryl and 3'-hydroxyl groups in double-stranded DNA using NAD as a coenzyme and as the energy source for the reaction. The protein is DNA ligase B of Pseudomonas syringae pv. syringae (strain B728a).